We begin with the raw amino-acid sequence, 268 residues long: Small ribosomal subunit protein eS1 (268 aa).

Positions 1 to 21 are disordered; it reads MAVGKNKGLSKGGKKGGKKKV.

The protein belongs to the eukaryotic ribosomal protein eS1 family. Component of the small ribosomal subunit. Mature ribosomes consist of a small (40S) and a large (60S) subunit. The 40S subunit contains about 33 different proteins and 1 molecule of RNA (18S). The 60S subunit contains about 49 different proteins and 3 molecules of RNA (28S, 5.8S and 5S).

It is found in the cytoplasm. Essential for oogenesis; required for late follicle cell development. The sequence is that of Small ribosomal subunit protein eS1 from Drosophila willistoni (Fruit fly).